The sequence spans 711 residues: MDDSDPPTYSLQIEPQDGCHPGDSVERRVTRLPSVSDENENQLAGDGPAGLTTSEGAMGRATVSEQDSLNNNESFPSSCEAAPTENAENTPSEGPKDDPPSLGQDQKLPAKRSPRAKKSSPKSAPPGDAVPVMQTQNATSQAAGEEEAAGVNANDPPKAPALQPLFSLIRGEVAQMDSRALPLFLHQVAETYFQEEDYEKAMKFIQLERLYHEQLLANLSAIQEQWETKWKAVQPRTVTPLRNSEKGFNGEDFEQLAKICTTHQDPLLSKLKTAPVEPSPERKSLARAIMSEEAVGTEAAAKEPEIETCPSTDPSGDRHEEEPQESSPGCHQMEWQTASPELPGTAGKDHTEELPSSTNATLDLHTQSLETAGSRSGPAAASNACKDSSCVPAPPTEDHCGVARDPKVAPPSESVAEQKLSTGDDGALPGLISEGKYSQAHRKELCLPLQDAFEALPRDQPHSSEVAEPRQPDVTASDGKSAQSQAGLETGPESALCGDRKACDVSTLCLEVCMAPEERRDSEDRVSKETEDYLHSLLERCLKDAEDSLSYEDIQDDDSDLLQDLSPEEASYSLQEDLPPDESTLSLDDLAKKIEIAEAIPAEGLVSILKKRNDTVGSHPAQMQQKPAKRRVRFQEIDDNLEQDEVGGGSCILLILLCIATVFLSVGGTALYCTLGNIESPVCTDFADNVDFYYTKLLQGVAGLKHWVYLS.

Disordered regions lie at residues 1 to 157, 294 to 332, 370 to 389, 394 to 432, and 457 to 496; these read MDDS…NDPP, AVGT…GCHQ, ETAG…KDSS, PPTE…PGLI, and PRDQ…ESAL. Residues 1 to 650 are Cytoplasmic-facing; it reads MDDSDPPTYS…LEQDEVGGGS (650 aa). Positions 63–77 are enriched in polar residues; the sequence is VSEQDSLNNNESFPS. A compositionally biased stretch (basic residues) spans 109-120; sequence PAKRSPRAKKSS. Basic and acidic residues-rich tracts occupy residues 396–407 and 457–471; these read TEDHCGVARDPK and PRDQ…EPRQ. Residues 478-487 show a composition bias toward polar residues; the sequence is DGKSAQSQAG. The chain crosses the membrane as a helical span at residues 651 to 671; it reads CILLILLCIATVFLSVGGTAL. At 672–711 the chain is on the extracellular side; that stretch reads YCTLGNIESPVCTDFADNVDFYYTKLLQGVAGLKHWVYLS.

This sequence belongs to the CNST family. In terms of assembly, interacts with connexins GJA1/CX43, GJB1/CX32, GJB2/CX26, GJB3/CX31, GJB6/CX30 and GJC1/CX45. Also interacts with GGA1 and GGA2. Does not interact with PANX1.

It is found in the cell membrane. Its subcellular location is the golgi apparatus. It localises to the trans-Golgi network membrane. The protein resides in the cytoplasmic vesicle. The protein localises to the secretory vesicle. Required for targeting of connexins to the plasma membrane. The chain is Consortin (Cnst) from Mus musculus (Mouse).